The following is a 113-amino-acid chain: Antisense of depressing factor protein 1 (113 aa).

Residues 1-11 (MGKCSMKKKGV) show a composition bias toward basic residues. Residues 1–35 (MGKCSMKKKGVGKNVGVGKKVQKKRSISTAERKRT) form a disordered region.

It belongs to the ADF1 family.

It is found in the nucleus. Functionally, transcriptional repressor which negatively regulates transcription of FYV5 by binding to the promoter on the sense strand. The polypeptide is Antisense of depressing factor protein 1 (Saccharomyces cerevisiae (strain ATCC 204508 / S288c) (Baker's yeast)).